The chain runs to 451 residues: AAA-ATPase At3g50940 (451 aa).

Residues 1-25 (MSSSSESHLATAKTALTAVASVAAA) form the signal peptide. 254–261 (GPPGTGKS) provides a ligand contact to ATP.

The protein belongs to the AAA ATPase family. BCS1 subfamily. The cofactor is Mg(2+).

The enzyme catalyses ATP + H2O = ADP + phosphate + H(+). The polypeptide is AAA-ATPase At3g50940 (Arabidopsis thaliana (Mouse-ear cress)).